We begin with the raw amino-acid sequence, 817 residues long: Dolichyl-phosphate-mannose--protein mannosyltransferase 1 (817 aa).

Serine 2 carries the post-translational modification N-acetylserine. Over 2 to 50 (SEEKTYKRVEQDDPVPELDIKQGPVRPFIVTDPSAELASLRTMVTLKEK) the chain is Cytoplasmic. Residues 51–70 (LLVACLAVFTAVIRLHGLAW) form a helical membrane-spanning segment. Topologically, residues 71–135 (PDSVVFDEVH…DSFPSTTPYV (65 aa)) are lumenal. A helical membrane pass occupies residues 136–154 (LMRFFSASLGALTVILMYM). At 155-179 (TLRYSGVRMWVALMSAICFAVENSY) the chain is on the cytoplasmic side. The chain crosses the membrane as a helical span at residues 180–200 (VTISRYILLDAPLMFFIAAAV). Residues 201–234 (YSFKKYEMYPANSLNAYKSLLATGIALGMASSSK) are Lumenal-facing. Residues 235–259 (WVGLFTVTWVGLLCIWRLWFMIGDL) traverse the membrane as a helical segment. Topologically, residues 260 to 273 (TKSSKSIFKVAFAK) are cytoplasmic. The chain crosses the membrane as a helical span at residues 274–291 (LAFLLGVPFALYLVFFYI). Over 292-584 (HFQSLTLDGD…GENNRNVYLL (293 aa)) the chain is Lumenal. MIR domains lie at 324–378 (VADV…LELY), 388–448 (FQNL…VEID), and 459–514 (ERVI…VENN). N-linked (GlcNAc...) asparagine glycans are attached at residues asparagine 390 and asparagine 513. A helical transmembrane segment spans residues 585–605 (GNAIVWWAVTAFIGIFGLIVI). Residues 606–685 (TELFSWQLGK…SYVFRSKRQM (80 aa)) lie on the Cytoplasmic side of the membrane. Residues 686 to 710 (GYAVVITFLAASVYFFKSFSPIIYG) traverse the membrane as a helical segment. At 711–817 (TPWTQELCQK…LKVEKRAVLE (107 aa)) the chain is on the lumenal side. The N-linked (GlcNAc...) asparagine glycan is linked to asparagine 743.

Belongs to the glycosyltransferase 39 family. In terms of assembly, PMT1 and PMT2 form a functional heterodimer. The complex interacts with endoplasmic reticulum proteins EMP24, ERV25, ERP1, ERP2, CDC48, HRD1, USA1, YOS9, ERO1, PDI1, UBR1, Cue4, DFM1 and TED1. Forms also a minor complex with PMT3.

The protein localises to the endoplasmic reticulum membrane. It catalyses the reaction a di-trans,poly-cis-dolichyl beta-D-mannosyl phosphate + L-seryl-[protein] = 3-O-(alpha-D-mannosyl)-L-seryl-[protein] + a di-trans,poly-cis-dolichyl phosphate + H(+). The enzyme catalyses a di-trans,poly-cis-dolichyl beta-D-mannosyl phosphate + L-threonyl-[protein] = 3-O-(alpha-D-mannosyl)-L-threonyl-[protein] + a di-trans,poly-cis-dolichyl phosphate + H(+). It participates in protein modification; protein glycosylation. Functionally, protein O-mannosyltransferase involved in O-glycosylation which is essential for cell wall rigidity. Forms a heterodimeric complex with PMT2 and more rarely with PMT3 to transfer mannose from Dol-P-mannose to Ser or Thr residues on proteins. The PMT1-PMT2 complex participates in oxidative protein folding, ER-associated protein degradation (ERAD), as well as ER export. Required for incorporation of proteins in the cell wall. The chain is Dolichyl-phosphate-mannose--protein mannosyltransferase 1 from Saccharomyces cerevisiae (strain ATCC 204508 / S288c) (Baker's yeast).